Reading from the N-terminus, the 438-residue chain is Enolase 1 (438 aa).

Substrate-binding residues include H160 and E169. Residue E212 is the Proton donor of the active site. Positions 247, 296, and 321 each coordinate Mg(2+). 2 residues coordinate substrate: E296 and D321. K346 serves as the catalytic Proton acceptor. Substrate contacts are provided by residues 373–376 (SHRS) and K397.

It belongs to the enolase family. Homodimer. The cofactor is Mg(2+).

It localises to the cytoplasm. It carries out the reaction (2R)-2-phosphoglycerate = phosphoenolpyruvate + H2O. Its pathway is carbohydrate degradation; glycolysis; pyruvate from D-glyceraldehyde 3-phosphate: step 4/5. The chain is Enolase 1 (ENO1) from Candida glabrata (strain ATCC 2001 / BCRC 20586 / JCM 3761 / NBRC 0622 / NRRL Y-65 / CBS 138) (Yeast).